The following is a 64-amino-acid chain: Large ribosomal subunit protein uL29 (64 aa).

The protein belongs to the universal ribosomal protein uL29 family.

This Cupriavidus necator (strain ATCC 17699 / DSM 428 / KCTC 22496 / NCIMB 10442 / H16 / Stanier 337) (Ralstonia eutropha) protein is Large ribosomal subunit protein uL29.